The primary structure comprises 330 residues: Lipoyl synthase (330 aa).

[4Fe-4S] cluster-binding residues include cysteine 77, cysteine 82, cysteine 88, cysteine 103, cysteine 107, cysteine 110, and serine 317. A Radical SAM core domain is found at phenylalanine 89–glutamate 306.

Belongs to the radical SAM superfamily. Lipoyl synthase family. The cofactor is [4Fe-4S] cluster.

The protein resides in the cytoplasm. The catalysed reaction is [[Fe-S] cluster scaffold protein carrying a second [4Fe-4S](2+) cluster] + N(6)-octanoyl-L-lysyl-[protein] + 2 oxidized [2Fe-2S]-[ferredoxin] + 2 S-adenosyl-L-methionine + 4 H(+) = [[Fe-S] cluster scaffold protein] + N(6)-[(R)-dihydrolipoyl]-L-lysyl-[protein] + 4 Fe(3+) + 2 hydrogen sulfide + 2 5'-deoxyadenosine + 2 L-methionine + 2 reduced [2Fe-2S]-[ferredoxin]. It functions in the pathway protein modification; protein lipoylation via endogenous pathway; protein N(6)-(lipoyl)lysine from octanoyl-[acyl-carrier-protein]: step 2/2. In terms of biological role, catalyzes the radical-mediated insertion of two sulfur atoms into the C-6 and C-8 positions of the octanoyl moiety bound to the lipoyl domains of lipoate-dependent enzymes, thereby converting the octanoylated domains into lipoylated derivatives. The chain is Lipoyl synthase from Actinobacillus pleuropneumoniae serotype 5b (strain L20).